The primary structure comprises 197 residues: MDAVSMYKYQREAWKRPKDSYVGELLKERLPKWRKGPSVQRIKRPTRIERARRLGYRAKPGYVVVRVRVPKGGRRKSRPKKGRRPKRMGKNKFSPGKSKQWIAEERAQRKYPNLEVLNSYWVGEDGQYKYYEVIMVDPYHPQIKSDHRINWICQKSQKGRVFRGKTGAGKKARGLRKRGKGAEKVRPSLRAHRRRGK.

Basic residues-rich tracts occupy residues proline 70 to lysine 90, arginine 163 to glycine 179, and proline 187 to lysine 197. Disordered regions lie at residues proline 70–lysine 99 and arginine 163–lysine 197.

Belongs to the eukaryotic ribosomal protein eL15 family.

The protein is Large ribosomal subunit protein eL15 of Methanopyrus kandleri (strain AV19 / DSM 6324 / JCM 9639 / NBRC 100938).